A 189-amino-acid chain; its full sequence is Class A basic helix-loop-helix protein 15 (189 aa).

Basic residues predominate over residues 1–12 (MKTKNRPPRRRA). Disordered stretches follow at residues 1–85 (MKTK…ERER) and 167–189 (TEAQ…REGT). Thr-25 carries the phosphothreonine modification. Residues 68 to 85 (GRRDSSIQRRLESNERER) show a composition bias toward basic and acidic residues. One can recognise a bHLH domain in the interval 75–127 (QRRLESNERERQRMHKLNNAFQALREVIPHVRADKKLSKIETLTLAKNYIKSL).

As to quaternary structure, forms homodimers or heterodimers with TCF3 gene products E12 and E47. These dimers bind to the E-box site, however, heterodimer with MYOD1 does not bind target DNA. As to expression, expressed in brain, liver, spleen and skeletal muscle.

The protein localises to the nucleus. Its function is as follows. Plays a role in controlling the transcriptional activity of MYOD1, ensuring that expanding myoblast populations remain undifferentiated. Repression may occur through muscle-specific E-box occupancy by homodimers. May also negatively regulate bHLH-mediated transcription through an N-terminal repressor domain. Serves as a key regulator of acinar cell function, stability, and identity. Also required for normal organelle localization in exocrine cells and for mitochondrial calcium ion transport. May function as a unique regulator of gene expression in several different embryonic and postnatal cell lineages. Binds to the E-box consensus sequence 5'-CANNTG-3'. This chain is Class A basic helix-loop-helix protein 15 (BHLHA15), found in Homo sapiens (Human).